Here is a 225-residue protein sequence, read N- to C-terminus: NAD(P)H-quinone oxidoreductase subunit K, chloroplastic (225 aa).

[4Fe-4S] cluster is bound by residues Cys-43, Cys-44, Cys-108, and Cys-139.

Belongs to the complex I 20 kDa subunit family. As to quaternary structure, NDH is composed of at least 16 different subunits, 5 of which are encoded in the nucleus. [4Fe-4S] cluster serves as cofactor.

Its subcellular location is the plastid. The protein localises to the chloroplast thylakoid membrane. It carries out the reaction a plastoquinone + NADH + (n+1) H(+)(in) = a plastoquinol + NAD(+) + n H(+)(out). The catalysed reaction is a plastoquinone + NADPH + (n+1) H(+)(in) = a plastoquinol + NADP(+) + n H(+)(out). Its function is as follows. NDH shuttles electrons from NAD(P)H:plastoquinone, via FMN and iron-sulfur (Fe-S) centers, to quinones in the photosynthetic chain and possibly in a chloroplast respiratory chain. The immediate electron acceptor for the enzyme in this species is believed to be plastoquinone. Couples the redox reaction to proton translocation, and thus conserves the redox energy in a proton gradient. This Olimarabidopsis pumila (Dwarf rocket) protein is NAD(P)H-quinone oxidoreductase subunit K, chloroplastic.